A 352-amino-acid polypeptide reads, in one-letter code: UDP-N-acetylglucosamine--N-acetylmuramyl-(pentapeptide) pyrophosphoryl-undecaprenol N-acetylglucosamine transferase (352 aa).

S195 and Q287 together coordinate UDP-N-acetyl-alpha-D-glucosamine.

Belongs to the glycosyltransferase 28 family. MurG subfamily.

It localises to the cell membrane. It catalyses the reaction Mur2Ac(oyl-L-Ala-gamma-D-Glu-L-Lys-D-Ala-D-Ala)-di-trans,octa-cis-undecaprenyl diphosphate + UDP-N-acetyl-alpha-D-glucosamine = beta-D-GlcNAc-(1-&gt;4)-Mur2Ac(oyl-L-Ala-gamma-D-Glu-L-Lys-D-Ala-D-Ala)-di-trans,octa-cis-undecaprenyl diphosphate + UDP + H(+). It participates in cell wall biogenesis; peptidoglycan biosynthesis. Cell wall formation. Catalyzes the transfer of a GlcNAc subunit on undecaprenyl-pyrophosphoryl-MurNAc-pentapeptide (lipid intermediate I) to form undecaprenyl-pyrophosphoryl-MurNAc-(pentapeptide)GlcNAc (lipid intermediate II). This chain is UDP-N-acetylglucosamine--N-acetylmuramyl-(pentapeptide) pyrophosphoryl-undecaprenol N-acetylglucosamine transferase, found in Streptococcus pneumoniae (strain 70585).